Reading from the N-terminus, the 501-residue chain is ATP synthase subunit alpha (501 aa).

Residue 169-176 (GDRQTGKT) coordinates ATP.

It belongs to the ATPase alpha/beta chains family. F-type ATPases have 2 components, CF(1) - the catalytic core - and CF(0) - the membrane proton channel. CF(1) has five subunits: alpha(3), beta(3), gamma(1), delta(1), epsilon(1). CF(0) has three main subunits: a(1), b(2) and c(9-12). The alpha and beta chains form an alternating ring which encloses part of the gamma chain. CF(1) is attached to CF(0) by a central stalk formed by the gamma and epsilon chains, while a peripheral stalk is formed by the delta and b chains.

It localises to the cell inner membrane. The enzyme catalyses ATP + H2O + 4 H(+)(in) = ADP + phosphate + 5 H(+)(out). Produces ATP from ADP in the presence of a proton gradient across the membrane. The alpha chain is a regulatory subunit. The polypeptide is ATP synthase subunit alpha (Campylobacter lari (strain RM2100 / D67 / ATCC BAA-1060)).